A 499-amino-acid chain; its full sequence is 3-octaprenyl-4-hydroxybenzoate carboxy-lyase (499 aa).

Asn-173 is a binding site for Mn(2+). Residues 176 to 178 (IYR), 190 to 192 (RWL), and 195 to 196 (RG) contribute to the prenylated FMN site. Residue Glu-239 coordinates Mn(2+). Asp-288 (proton donor) is an active-site residue.

Belongs to the UbiD family. Homohexamer. Requires prenylated FMN as cofactor. Mn(2+) is required as a cofactor.

It localises to the cell membrane. The enzyme catalyses a 4-hydroxy-3-(all-trans-polyprenyl)benzoate + H(+) = a 2-(all-trans-polyprenyl)phenol + CO2. Its pathway is cofactor biosynthesis; ubiquinone biosynthesis. Functionally, catalyzes the decarboxylation of 3-octaprenyl-4-hydroxy benzoate to 2-octaprenylphenol, an intermediate step in ubiquinone biosynthesis. This chain is 3-octaprenyl-4-hydroxybenzoate carboxy-lyase, found in Blochmanniella floridana.